The primary structure comprises 192 residues: Small ribosomal subunit protein uS5 (192 aa).

The tract at residues 1 to 21 (MAAERERGGRERGGRDRDERD) is disordered. The 64-residue stretch at 24-87 (FVDKLVHINR…DSAKRNLTRV (64 aa)) folds into the S5 DRBM domain.

Belongs to the universal ribosomal protein uS5 family. In terms of assembly, part of the 30S ribosomal subunit. Contacts proteins S4 and S8.

Its function is as follows. With S4 and S12 plays an important role in translational accuracy. Located at the back of the 30S subunit body where it stabilizes the conformation of the head with respect to the body. This is Small ribosomal subunit protein uS5 from Afipia carboxidovorans (strain ATCC 49405 / DSM 1227 / KCTC 32145 / OM5) (Oligotropha carboxidovorans).